A 442-amino-acid polypeptide reads, in one-letter code: Tubulin beta chain (442 aa).

The GTP site is built by Gln11, Glu69, Ser138, Gly142, Thr143, Gly144, Asn204, and Asn226. Glu69 serves as a coordination point for Mg(2+).

This sequence belongs to the tubulin family. In terms of assembly, dimer of alpha and beta chains. A typical microtubule is a hollow water-filled tube with an outer diameter of 25 nm and an inner diameter of 15 nM. Alpha-beta heterodimers associate head-to-tail to form protofilaments running lengthwise along the microtubule wall with the beta-tubulin subunit facing the microtubule plus end conferring a structural polarity. Microtubules usually have 13 protofilaments but different protofilament numbers can be found in some organisms and specialized cells. Mg(2+) serves as cofactor.

Its subcellular location is the cytoplasm. The protein resides in the cytoskeleton. In terms of biological role, tubulin is the major constituent of microtubules, a cylinder consisting of laterally associated linear protofilaments composed of alpha- and beta-tubulin heterodimers. Microtubules grow by the addition of GTP-tubulin dimers to the microtubule end, where a stabilizing cap forms. Below the cap, tubulin dimers are in GDP-bound state, owing to GTPase activity of alpha-tubulin. The sequence is that of Tubulin beta chain (TUB-B) from Pneumocystis carinii.